The following is a 331-amino-acid chain: D-alanine--D-alanine ligase (331 aa).

Residues 121-327 (KLWYDALGIP…FSQFLENCVR (207 aa)) enclose the ATP-grasp domain. 151 to 206 (AFESWGKVFVKAARQGSSVGCYQVNQVEELSEAINKAFTFSDQVLIEKSVVPRELE) provides a ligand contact to ATP. Residues Asp-281, Glu-294, and Asn-296 each coordinate Mg(2+).

This sequence belongs to the D-alanine--D-alanine ligase family. Mg(2+) serves as cofactor. It depends on Mn(2+) as a cofactor.

The protein localises to the cytoplasm. The enzyme catalyses 2 D-alanine + ATP = D-alanyl-D-alanine + ADP + phosphate + H(+). The protein operates within cell wall biogenesis; peptidoglycan biosynthesis. Cell wall formation. In Vibrio atlanticus (strain LGP32) (Vibrio splendidus (strain Mel32)), this protein is D-alanine--D-alanine ligase.